Here is a 262-residue protein sequence, read N- to C-terminus: Phosphatidylglycerol--prolipoprotein diacylglyceryl transferase (262 aa).

The next 4 helical transmembrane spans lie at 17–37 (LAIHWYGLMYLIGFALVYALG), 57–77 (LIFYSVLGVVLGGRLGYVLFY), 95–115 (GGMSFHGGLIGVIVVMLLFAH), and 119–139 (LGFFTVSDFIAPLIPLGLAAG). Position 140 (arginine 140) interacts with a 1,2-diacyl-sn-glycero-3-phospho-(1'-sn-glycerol). Helical transmembrane passes span 173-193 (PSQLYELGLEGIVLFALLWWY), 200-220 (AGQVSAMFLMGYGAFRFLVEF), and 227-247 (FLGLLAAGLSMGQWLSIPMVL).

It belongs to the Lgt family.

It localises to the cell inner membrane. It carries out the reaction L-cysteinyl-[prolipoprotein] + a 1,2-diacyl-sn-glycero-3-phospho-(1'-sn-glycerol) = an S-1,2-diacyl-sn-glyceryl-L-cysteinyl-[prolipoprotein] + sn-glycerol 1-phosphate + H(+). The protein operates within protein modification; lipoprotein biosynthesis (diacylglyceryl transfer). In terms of biological role, catalyzes the transfer of the diacylglyceryl group from phosphatidylglycerol to the sulfhydryl group of the N-terminal cysteine of a prolipoprotein, the first step in the formation of mature lipoproteins. This is Phosphatidylglycerol--prolipoprotein diacylglyceryl transferase from Bordetella parapertussis (strain 12822 / ATCC BAA-587 / NCTC 13253).